The chain runs to 633 residues: Glutamyl-tRNA(Gln) amidotransferase subunit E (633 aa).

This sequence belongs to the GatB/GatE family. GatE subfamily. In terms of assembly, heterodimer of GatD and GatE.

The enzyme catalyses L-glutamyl-tRNA(Gln) + L-glutamine + ATP + H2O = L-glutaminyl-tRNA(Gln) + L-glutamate + ADP + phosphate + H(+). Functionally, allows the formation of correctly charged Gln-tRNA(Gln) through the transamidation of misacylated Glu-tRNA(Gln) in organisms which lack glutaminyl-tRNA synthetase. The reaction takes place in the presence of glutamine and ATP through an activated gamma-phospho-Glu-tRNA(Gln). The GatDE system is specific for glutamate and does not act on aspartate. The polypeptide is Glutamyl-tRNA(Gln) amidotransferase subunit E (Methanosarcina acetivorans (strain ATCC 35395 / DSM 2834 / JCM 12185 / C2A)).